A 181-amino-acid polypeptide reads, in one-letter code: Adenylate kinase (181 aa).

Position 10-15 (10-15 (GAGKGT)) interacts with ATP. Residues 30–59 (STGDLFRANISQQTPLGREAQKYMDAGDLV) form an NMP region. AMP is bound by residues Thr31, Arg36, 57–59 (DLV), 85–88 (GYPR), and Gln92. Residues 126–132 (ARGRNDD) form an LID region. Arg127 serves as a coordination point for ATP. Arg129 and Arg140 together coordinate AMP. Residue Gly166 coordinates ATP.

It belongs to the adenylate kinase family. In terms of assembly, monomer.

It is found in the cytoplasm. The enzyme catalyses AMP + ATP = 2 ADP. It participates in purine metabolism; AMP biosynthesis via salvage pathway; AMP from ADP: step 1/1. Its function is as follows. Catalyzes the reversible transfer of the terminal phosphate group between ATP and AMP. Plays an important role in cellular energy homeostasis and in adenine nucleotide metabolism. This Nocardia farcinica (strain IFM 10152) protein is Adenylate kinase.